The sequence spans 555 residues: Glucose-6-phosphate isomerase (555 aa).

Glutamate 365 functions as the Proton donor in the catalytic mechanism. Residues histidine 396 and lysine 522 contribute to the active site.

This sequence belongs to the GPI family.

It is found in the cytoplasm. The catalysed reaction is alpha-D-glucose 6-phosphate = beta-D-fructose 6-phosphate. The protein operates within carbohydrate biosynthesis; gluconeogenesis. Its pathway is carbohydrate degradation; glycolysis; D-glyceraldehyde 3-phosphate and glycerone phosphate from D-glucose: step 2/4. Catalyzes the reversible isomerization of glucose-6-phosphate to fructose-6-phosphate. In Psychrobacter arcticus (strain DSM 17307 / VKM B-2377 / 273-4), this protein is Glucose-6-phosphate isomerase.